Here is a 631-residue protein sequence, read N- to C-terminus: Guanylate-binding protein 4 (631 aa).

A GB1/RHD3-type G domain is found at 33 to 283 (SQPVVVVAIV…FASYIFTYAK (251 aa)). Residues 43-50 (GWSHTGKS) and 103-107 (DTEGL) contribute to the GTP site. Residues 492-592 (IAEKHTKKEA…GHNIKEMKQN (101 aa)) adopt a coiled-coil conformation.

The protein belongs to the TRAFAC class dynamin-like GTPase superfamily. GB1/RHD3 GTPase family. GB1 subfamily. In terms of assembly, heterodimer with other family members, including GBP1, GBP2 and GBP5. Dimerization regulates subcellular location. Interacts with IRF7; preventing interaction between TRAF6 and IRF7, resulting in impaired TRAF6-mediated IRF7 ubiquitination. In terms of tissue distribution, mainly expressed in organs of the immune system, such as spleen and lymph nodes.

It localises to the golgi apparatus membrane. The protein localises to the cytoplasm. Its subcellular location is the nucleus. It is found in the perinuclear region. It catalyses the reaction GTP + H2O = GDP + phosphate + H(+). Functionally, interferon (IFN)-inducible GTPase that plays important roles in innate immunity against a diverse range of bacterial, viral and protozoan pathogens. Negatively regulates the antiviral response by inhibiting activation of IRF7 transcription factor. The polypeptide is Guanylate-binding protein 4 (Mus musculus (Mouse)).